We begin with the raw amino-acid sequence, 104 residues long: Large ribosomal subunit protein bL21 (104 aa).

This sequence belongs to the bacterial ribosomal protein bL21 family. In terms of assembly, part of the 50S ribosomal subunit. Contacts protein L20.

This protein binds to 23S rRNA in the presence of protein L20. The sequence is that of Large ribosomal subunit protein bL21 from Thermodesulfovibrio yellowstonii (strain ATCC 51303 / DSM 11347 / YP87).